Reading from the N-terminus, the 140-residue chain is Small ribosomal subunit protein uS19 (140 aa).

Residues 120 to 140 are disordered; that stretch reads RPKHSAPGIGATRSSAHVSKK. The segment covering 131 to 140 has biased composition (polar residues); that stretch reads TRSSAHVSKK.

It belongs to the universal ribosomal protein uS19 family.

Its function is as follows. Protein S19 forms a complex with S13 that binds strongly to the 16S ribosomal RNA. The protein is Small ribosomal subunit protein uS19 of Nanoarchaeum equitans (strain Kin4-M).